The primary structure comprises 334 residues: N-acetyl-gamma-glutamyl-phosphate reductase (334 aa).

Residue Cys-142 is part of the active site.

This sequence belongs to the NAGSA dehydrogenase family. Type 1 subfamily.

Its subcellular location is the cytoplasm. The catalysed reaction is N-acetyl-L-glutamate 5-semialdehyde + phosphate + NADP(+) = N-acetyl-L-glutamyl 5-phosphate + NADPH + H(+). The protein operates within amino-acid biosynthesis; L-arginine biosynthesis; N(2)-acetyl-L-ornithine from L-glutamate: step 3/4. Catalyzes the NADPH-dependent reduction of N-acetyl-5-glutamyl phosphate to yield N-acetyl-L-glutamate 5-semialdehyde. This is N-acetyl-gamma-glutamyl-phosphate reductase from Pelodictyon phaeoclathratiforme (strain DSM 5477 / BU-1).